We begin with the raw amino-acid sequence, 229 residues long: Large ribosomal subunit protein uL1 (229 aa).

This sequence belongs to the universal ribosomal protein uL1 family. Part of the 50S ribosomal subunit.

Its function is as follows. Binds directly to 23S rRNA. The L1 stalk is quite mobile in the ribosome, and is involved in E site tRNA release. In terms of biological role, protein L1 is also a translational repressor protein, it controls the translation of the L11 operon by binding to its mRNA. This chain is Large ribosomal subunit protein uL1, found in Streptococcus gordonii (strain Challis / ATCC 35105 / BCRC 15272 / CH1 / DL1 / V288).